Consider the following 253-residue polypeptide: Phosphate import ATP-binding protein PstB (253 aa).

Positions 7–249 constitute an ABC transporter domain; sequence ASAKNLNLWY…PQSSKTKRYI (243 aa). 39 to 46 contacts ATP; the sequence is GPSGCGKS.

It belongs to the ABC transporter superfamily. Phosphate importer (TC 3.A.1.7) family. The complex is composed of two ATP-binding proteins (PstB), two transmembrane proteins (PstC and PstA) and a solute-binding protein (PstS).

The protein resides in the cell inner membrane. It catalyses the reaction phosphate(out) + ATP + H2O = ADP + 2 phosphate(in) + H(+). In terms of biological role, part of the ABC transporter complex PstSACB involved in phosphate import. Responsible for energy coupling to the transport system. This chain is Phosphate import ATP-binding protein PstB, found in Ehrlichia ruminantium (strain Gardel).